The following is a 405-amino-acid chain: Serpin I2 (405 aa).

A signal peptide spans 1 to 18 (MNKTILWSFLLFFSGSQT). Asn306 carries an N-linked (GlcNAc...) asparagine glycan.

This sequence belongs to the serpin family. As to expression, expressed in pancreas.

The protein resides in the secreted. The polypeptide is Serpin I2 (Serpini2) (Mus musculus (Mouse)).